We begin with the raw amino-acid sequence, 719 residues long: MEKFLFYLFLIGIAVRAQICPKRCVCQILSPNLATLCAKKGLLFVPPNIDRRTVELRLADNFVTNIKRKDFANMTSLVDLTLSRNTISFITPHAFADLRNLRALHLNSNRLTKITNDMFSGLSNLHHLILNNNQLTLISSTAFDDVFALEELDLSYNNLETIPWDAVEKMVSLHTLSLDHNMIDNIPKGTFSHLHKMTRLDVTSNKLQKLPPDPLFQRAQVLATSGIISPSTFALSFGGNPLHCNCELLWLRRLSREDDLETCASPALLTGRYFWSIPEEEFLCEPPLITRHTHEMRVLEGQRATLRCKARGDPEPAIHWISPEGKLISNATRSLVYDNGTLDILITTVKDTGAFTCIASNPAGEATQTVDLHIIKLPHLLNSTNHIHEPDPGSSDISTSTKSGSNASSSNGDTKMSQDKIVVAEATSSTALLKFNFQRNIPGIRMFQIQYNGTYDDTLVYRMIPPTSKTFLVNNLASGTMYDLCVLAIYDDGITSLTATRVVGCIQFTTEQDYVRCHFMQSQFLGGTMIIIIGGIIVASVLVFIIILMIRYKVCNNNGQHKVTKVSNVYSQTNGAQMQGCSVTLPQSMSKQAMGHEENAQCCKVASDNAIQSSETCSSQDSSTTTSALPPTWTSSAPVSQKQKRKTGTKPSAEPQSEAVTNVESQNTNRNNSTALQLASCPPDSVTEGPTSQRAHTKPNALLTNVDQNVQETQRLESI.

Residues 1–17 form the signal peptide; that stretch reads MEKFLFYLFLIGIAVRA. In terms of domain architecture, LRRNT spans 18-51; the sequence is QICPKRCVCQILSPNLATLCAKKGLLFVPPNIDR. The Extracellular portion of the chain corresponds to 18-529; sequence QICPKRCVCQ…MQSQFLGGTM (512 aa). LRR repeat units lie at residues 52 to 73, 76 to 97, 100 to 121, 124 to 145, 148 to 169, 172 to 193, and 196 to 217; these read RTVELRLADNFVTNIKRKDFAN, SLVDLTLSRNTISFITPHAFAD, NLRALHLNSNRLTKITNDMFSG, NLHHLILNNNQLTLISSTAFDD, ALEELDLSYNNLETIPWDAVEK, SLHTLSLDHNMIDNIPKGTFSH, and KMTRLDVTSNKLQKLPPDPLFQ. N-linked (GlcNAc...) asparagine glycosylation is present at Asn73. Residues 240-286 enclose the LRRCT domain; it reads NPLHCNCELLWLRRLSREDDLETCASPALLTGRYFWSIPEEEFLCEP. The region spanning 287-373 is the Ig-like domain; the sequence is PLITRHTHEM…GEATQTVDLH (87 aa). A disulfide bridge links Cys308 with Cys357. N-linked (GlcNAc...) asparagine glycosylation is found at Asn330, Asn339, Asn382, Asn406, and Asn452. The segment at 385-416 is disordered; that stretch reads NHIHEPDPGSSDISTSTKSGSNASSSNGDTKM. The segment covering 393 to 412 has biased composition (low complexity); that stretch reads GSSDISTSTKSGSNASSSNG. The Fibronectin type-III domain maps to 414–503; the sequence is TKMSQDKIVV…ITSLTATRVV (90 aa). The chain crosses the membrane as a helical span at residues 530 to 550; that stretch reads IIIIGGIIVASVLVFIIILMI. Topologically, residues 551–719 are cytoplasmic; the sequence is RYKVCNNNGQ…VQETQRLESI (169 aa). The segment covering 614 to 627 has biased composition (low complexity); that stretch reads SETCSSQDSSTTTS. The disordered stretch occupies residues 614 to 719; that stretch reads SETCSSQDSS…VQETQRLESI (106 aa). Composition is skewed to polar residues over residues 628–641, 654–677, and 702–713; these read ALPPTWTSSAPVSQ, EPQSEAVTNVESQNTNRNNSTALQ, and LLTNVDQNVQET.

It belongs to the LRFN family. In terms of assembly, can form heteromeric complexes with LRFN1, LRFN2, LRFN3 and LFRN4. Able to form homomeric complexes across cell junctions, between adjacent cells. Does not interact with DLG1, DLG2 or DLG3. Does not interact with DLG4. Post-translationally, glycosylated. In terms of tissue distribution, predominantly expressed in the brain, with a weak, but broad expression in the cerebral cortex and diencephalic nuclei. Strongly expressed in both the pyramidal layer and the dentate gyrus of the hippocampus. Also detected in other parts of the central nervous system, including the olfactory bulb, pons, cerebellum, and medulla oblongata, as well as in the peripheral nervous system, such as the ganglia of cranial nerves and the dorsal root ganglion during gestation.

It is found in the membrane. In terms of biological role, cell adhesion molecule that mediates homophilic cell-cell adhesion in a Ca(2+)-independent manner. Promotes neurite outgrowth in hippocampal neurons. This is Leucine-rich repeat and fibronectin type-III domain-containing protein 5 (Lrfn5) from Mus musculus (Mouse).